The chain runs to 488 residues: Ribulose bisphosphate carboxylase large chain (488 aa).

2 residues coordinate substrate: N127 and T177. K179 acts as the Proton acceptor in catalysis. K181 serves as a coordination point for substrate. Residues K205, D207, and E208 each coordinate Mg(2+). K205 bears the N6-carboxylysine mark. The active-site Proton acceptor is the H297. 3 residues coordinate substrate: R298, H330, and S382.

Belongs to the RuBisCO large chain family. Type I subfamily. As to quaternary structure, heterohexadecamer of 8 large chains and 8 small chains. Requires Mg(2+) as cofactor.

Its subcellular location is the plastid. It is found in the chloroplast. The catalysed reaction is 2 (2R)-3-phosphoglycerate + 2 H(+) = D-ribulose 1,5-bisphosphate + CO2 + H2O. It carries out the reaction D-ribulose 1,5-bisphosphate + O2 = 2-phosphoglycolate + (2R)-3-phosphoglycerate + 2 H(+). RuBisCO catalyzes two reactions: the carboxylation of D-ribulose 1,5-bisphosphate, the primary event in carbon dioxide fixation, as well as the oxidative fragmentation of the pentose substrate in the photorespiration process. Both reactions occur simultaneously and in competition at the same active site. This chain is Ribulose bisphosphate carboxylase large chain, found in Olisthodiscus luteus (Marine phytoflagellate).